The chain runs to 361 residues: Lipoyl synthase 1, chloroplastic (361 aa).

Residues Cys87, Cys92, Cys98, Cys124, Cys128, Cys131, and Ser339 each contribute to the [4Fe-4S] cluster site. The Radical SAM core domain occupies 107–328 (GEGDGIATAT…KEYGESVGFR (222 aa)).

It belongs to the radical SAM superfamily. Lipoyl synthase family. [4Fe-4S] cluster is required as a cofactor.

The protein resides in the plastid. It is found in the chloroplast. The catalysed reaction is [[Fe-S] cluster scaffold protein carrying a second [4Fe-4S](2+) cluster] + N(6)-octanoyl-L-lysyl-[protein] + 2 oxidized [2Fe-2S]-[ferredoxin] + 2 S-adenosyl-L-methionine + 4 H(+) = [[Fe-S] cluster scaffold protein] + N(6)-[(R)-dihydrolipoyl]-L-lysyl-[protein] + 4 Fe(3+) + 2 hydrogen sulfide + 2 5'-deoxyadenosine + 2 L-methionine + 2 reduced [2Fe-2S]-[ferredoxin]. Its pathway is protein modification; protein lipoylation via endogenous pathway; protein N(6)-(lipoyl)lysine from octanoyl-[acyl-carrier-protein]: step 2/2. In terms of biological role, catalyzes the radical-mediated insertion of two sulfur atoms into the C-6 and C-8 positions of the octanoyl moiety bound to the lipoyl domains of lipoate-dependent enzymes, thereby converting the octanoylated domains into lipoylated derivatives. The chain is Lipoyl synthase 1, chloroplastic from Zea mays (Maize).